The primary structure comprises 101 residues: NAD(P)H-quinone oxidoreductase subunit 4L, chloroplastic (101 aa).

The next 3 helical transmembrane spans lie at 2–22 (MFEH…YGLI), 32–52 (ICLE…SDLF), and 61–81 (IFAI…LSIL).

This sequence belongs to the complex I subunit 4L family. NDH is composed of at least 16 different subunits, 5 of which are encoded in the nucleus.

It localises to the plastid. Its subcellular location is the chloroplast thylakoid membrane. The catalysed reaction is a plastoquinone + NADH + (n+1) H(+)(in) = a plastoquinol + NAD(+) + n H(+)(out). It catalyses the reaction a plastoquinone + NADPH + (n+1) H(+)(in) = a plastoquinol + NADP(+) + n H(+)(out). NDH shuttles electrons from NAD(P)H:plastoquinone, via FMN and iron-sulfur (Fe-S) centers, to quinones in the photosynthetic chain and possibly in a chloroplast respiratory chain. The immediate electron acceptor for the enzyme in this species is believed to be plastoquinone. Couples the redox reaction to proton translocation, and thus conserves the redox energy in a proton gradient. The sequence is that of NAD(P)H-quinone oxidoreductase subunit 4L, chloroplastic from Oryza nivara (Indian wild rice).